Here is a 330-residue protein sequence, read N- to C-terminus: DNA-directed RNA polymerase subunit alpha (330 aa).

The segment at 1-236 is alpha N-terminal domain (alpha-NTD); the sequence is MQGSVTEFLK…EQLDAFVDLR (236 aa). Residues 250-330 are alpha C-terminal domain (alpha-CTD); the sequence is FDPILLRPVD…NWPPASIAED (81 aa).

It belongs to the RNA polymerase alpha chain family. In terms of assembly, homodimer. The RNAP catalytic core consists of 2 alpha, 1 beta, 1 beta' and 1 omega subunit. When a sigma factor is associated with the core the holoenzyme is formed, which can initiate transcription.

The catalysed reaction is RNA(n) + a ribonucleoside 5'-triphosphate = RNA(n+1) + diphosphate. DNA-dependent RNA polymerase catalyzes the transcription of DNA into RNA using the four ribonucleoside triphosphates as substrates. The polypeptide is DNA-directed RNA polymerase subunit alpha (Vibrio cholerae serotype O1 (strain ATCC 39315 / El Tor Inaba N16961)).